We begin with the raw amino-acid sequence, 223 residues long: NAD(P)H-hydrate epimerase (223 aa).

The 203-residue stretch at 9–211 (AIKLDEELMG…ELKDKLHLIL (203 aa)) folds into the YjeF N-terminal domain. 60–64 (NNGGD) provides a ligand contact to (6S)-NADPHX. Residues Asn61 and Asp120 each contribute to the K(+) site. Residues 124 to 130 (GFSFKGP) and Asp153 each bind (6S)-NADPHX. Position 156 (Ser156) interacts with K(+).

This sequence belongs to the NnrE/AIBP family. It depends on K(+) as a cofactor.

It catalyses the reaction (6R)-NADHX = (6S)-NADHX. The enzyme catalyses (6R)-NADPHX = (6S)-NADPHX. In terms of biological role, catalyzes the epimerization of the S- and R-forms of NAD(P)HX, a damaged form of NAD(P)H that is a result of enzymatic or heat-dependent hydration. This is a prerequisite for the S-specific NAD(P)H-hydrate dehydratase to allow the repair of both epimers of NAD(P)HX. In Entamoeba histolytica (strain ATCC 30459 / HM-1:IMSS / ABRM), this protein is NAD(P)H-hydrate epimerase.